The sequence spans 368 residues: MKLFKLSIHGFRSHQDAVFLPHDGINLIYGKNGTGKTNLLEAIHYTCLTKSFLSTSDSDALHFQAGHFELEAVLQSDSENESKVRVYYSPAEGKHVFINKTPLESFSKIVGEFPCVALSPYDIALTQGSPQERRRFLDASISQTNKAYLADLLSYRRVLAQRNKLLADMKHRTFSSPELDVWTASLSALAASIIFRRIHFVRDFAQYLENAYADFQSIDETPGLTYKTELSLNENSFSEAELAKQISEKFEEMKFDELRRGLTLFGPHRDDLAFSINNLSLRKYASQGQHKTFVICLKLAQYFYICELLSEKPIFLLDDVFSELDSQRAEELVRILSSKRSGQSFITTTERKDFAEVKQHTIGGIISG.

30 to 37 (GKNGTGKT) lines the ATP pocket.

Belongs to the RecF family.

It localises to the cytoplasm. In terms of biological role, the RecF protein is involved in DNA metabolism; it is required for DNA replication and normal SOS inducibility. RecF binds preferentially to single-stranded, linear DNA. It also seems to bind ATP. The chain is DNA replication and repair protein RecF from Chloroherpeton thalassium (strain ATCC 35110 / GB-78).